A 262-amino-acid chain; its full sequence is Cytochrome c oxidase subunit 2 (262 aa).

Helical transmembrane passes span 31-51 (HIMF…YVII) and 72-92 (IIWT…SFIL). Residues His-175, Cys-210, Glu-212, Cys-214, His-218, and Met-221 each coordinate Cu cation. Mg(2+) is bound at residue Glu-212.

The protein belongs to the cytochrome c oxidase subunit 2 family. In terms of assembly, component of the cytochrome c oxidase (complex IV, CIV), a multisubunit enzyme composed of a catalytic core of 3 subunits and several supernumerary subunits. The complex exists as a monomer or a dimer and forms supercomplexes (SCs) in the inner mitochondrial membrane with ubiquinol-cytochrome c oxidoreductase (cytochrome b-c1 complex, complex III, CIII). Requires Cu cation as cofactor.

The protein resides in the mitochondrion inner membrane. It carries out the reaction 4 Fe(II)-[cytochrome c] + O2 + 8 H(+)(in) = 4 Fe(III)-[cytochrome c] + 2 H2O + 4 H(+)(out). Component of the cytochrome c oxidase, the last enzyme in the mitochondrial electron transport chain which drives oxidative phosphorylation. The respiratory chain contains 3 multisubunit complexes succinate dehydrogenase (complex II, CII), ubiquinol-cytochrome c oxidoreductase (cytochrome b-c1 complex, complex III, CIII) and cytochrome c oxidase (complex IV, CIV), that cooperate to transfer electrons derived from NADH and succinate to molecular oxygen, creating an electrochemical gradient over the inner membrane that drives transmembrane transport and the ATP synthase. Cytochrome c oxidase is the component of the respiratory chain that catalyzes the reduction of oxygen to water. Electrons originating from reduced cytochrome c in the intermembrane space (IMS) are transferred via the dinuclear copper A center (CU(A)) of subunit 2 and heme A of subunit 1 to the active site in subunit 1, a binuclear center (BNC) formed by heme A3 and copper B (CU(B)). The BNC reduces molecular oxygen to 2 water molecules using 4 electrons from cytochrome c in the IMS and 4 protons from the mitochondrial matrix. The polypeptide is Cytochrome c oxidase subunit 2 (COX2) (Candida albicans (strain SC5314 / ATCC MYA-2876) (Yeast)).